Here is a 114-residue protein sequence, read N- to C-terminus: Chaperonin GroEL (114 aa).

Position 22 to 26 (22 to 26 (DGTTT)) interacts with ATP.

It belongs to the chaperonin (HSP60) family. Forms a cylinder of 14 subunits composed of two heptameric rings stacked back-to-back. Interacts with the co-chaperonin GroES.

Its subcellular location is the cytoplasm. It catalyses the reaction ATP + H2O + a folded polypeptide = ADP + phosphate + an unfolded polypeptide.. Together with its co-chaperonin GroES, plays an essential role in assisting protein folding. The GroEL-GroES system forms a nano-cage that allows encapsulation of the non-native substrate proteins and provides a physical environment optimized to promote and accelerate protein folding. The sequence is that of Chaperonin GroEL from Mycobacterium ulcerans.